The following is a 387-amino-acid chain: Pepsin A (387 aa).

A signal peptide spans 1–15; the sequence is MKWLLLLSLVALSEC. Positions 16-61 are cleaved as a propeptide — activation peptide; that stretch reads LYKVSLIKKKSLRKNLIEHGLLKDFLKNNTLDPASKYFPQGEAATM. The Peptidase A1 domain occupies 75 to 384; sequence YFGTIGIGTP…DRANNQVGLA (310 aa). Residue D93 is part of the active site. An intrachain disulfide couples C106 to C111. S129 is modified (phosphoserine). A disulfide bridge connects residues C267 and C271. D276 is a catalytic residue. C310 and C343 are joined by a disulfide.

This sequence belongs to the peptidase A1 family.

It is found in the secreted. It carries out the reaction Preferential cleavage: hydrophobic, preferably aromatic, residues in P1 and P1' positions. Cleaves 1-Phe-|-Val-2, 4-Gln-|-His-5, 13-Glu-|-Ala-14, 14-Ala-|-Leu-15, 15-Leu-|-Tyr-16, 16-Tyr-|-Leu-17, 23-Gly-|-Phe-24, 24-Phe-|-Phe-25 and 25-Phe-|-Tyr-26 bonds in the B chain of insulin.. Its activity is regulated as follows. Inhibited by pepstatin. In terms of biological role, shows particularly broad specificity; although bonds involving phenylalanine and leucine are preferred, many others are also cleaved to some extent. The polypeptide is Pepsin A (PGA) (Callithrix jacchus (White-tufted-ear marmoset)).